Consider the following 205-residue polypeptide: Small ribosomal subunit protein uS2 (205 aa).

It belongs to the universal ribosomal protein uS2 family.

In Methanoculleus marisnigri (strain ATCC 35101 / DSM 1498 / JR1), this protein is Small ribosomal subunit protein uS2.